An 876-amino-acid polypeptide reads, in one-letter code: Alanine--tRNA ligase (876 aa).

At K74 the chain carries N6-acetyllysine. Zn(2+) is bound by residues H564, H568, C666, and H670.

It belongs to the class-II aminoacyl-tRNA synthetase family. As to quaternary structure, homotetramer. Requires Zn(2+) as cofactor.

The protein localises to the cytoplasm. It carries out the reaction tRNA(Ala) + L-alanine + ATP = L-alanyl-tRNA(Ala) + AMP + diphosphate. Catalyzes the attachment of alanine to tRNA(Ala) in a two-step reaction: alanine is first activated by ATP to form Ala-AMP and then transferred to the acceptor end of tRNA(Ala). Also edits incorrectly charged Ser-tRNA(Ala) and Gly-tRNA(Ala) via its editing domain. This Shigella sonnei (strain Ss046) protein is Alanine--tRNA ligase.